Reading from the N-terminus, the 341-residue chain is GTPase Obg (341 aa).

An Obg domain is found at 1 to 159 (MKFVDEALIK…RNLRLELRVL (159 aa)). A disordered region spans residues 128–150 (TRYKSSVNRSPRQTTPGSPGESR). A compositionally biased stretch (polar residues) spans 129 to 144 (RYKSSVNRSPRQTTPG). An OBG-type G domain is found at 160–334 (ADVGLLGLPN…LCYALMQLID (175 aa)). GTP is bound by residues 166 to 173 (GLPNAGKS), 191 to 195 (FTTLH), 213 to 216 (DIPG), 283 to 286 (NKID), and 315 to 317 (SAI). Mg(2+) contacts are provided by Ser173 and Thr193.

This sequence belongs to the TRAFAC class OBG-HflX-like GTPase superfamily. OBG GTPase family. In terms of assembly, monomer. It depends on Mg(2+) as a cofactor.

Its subcellular location is the cytoplasm. Its function is as follows. An essential GTPase which binds GTP, GDP and possibly (p)ppGpp with moderate affinity, with high nucleotide exchange rates and a fairly low GTP hydrolysis rate. Plays a role in control of the cell cycle, stress response, ribosome biogenesis and in those bacteria that undergo differentiation, in morphogenesis control. In Legionella pneumophila subsp. pneumophila (strain Philadelphia 1 / ATCC 33152 / DSM 7513), this protein is GTPase Obg.